A 201-amino-acid polypeptide reads, in one-letter code: Alpha-1-acid glycoprotein (201 aa).

An N-terminal signal peptide occupies residues 1-18 (MALPWALAVLSLLPLLHA). N-linked (GlcNAc...) asparagine glycans are attached at residues asparagine 25, asparagine 33, asparagine 87, asparagine 93, asparagine 103, and asparagine 169. An intrachain disulfide couples cysteine 90 to cysteine 183.

This sequence belongs to the calycin superfamily. Lipocalin family.

Its subcellular location is the secreted. Functionally, functions as a transport protein in the blood stream. Binds various ligands in the interior of its beta-barrel domain. Appears to function in modulating the activity of the immune system during the acute-phase reaction. The chain is Alpha-1-acid glycoprotein (ORM1) from Oryctolagus cuniculus (Rabbit).